The sequence spans 658 residues: Glycogen debranching enzyme (658 aa).

D335 functions as the Nucleophile in the catalytic mechanism. E370 serves as the catalytic Proton donor. Over residues 457–468 (NDANGEGNRDGT) the composition is skewed to basic and acidic residues. Positions 457–478 (NDANGEGNRDGTDSNFSNNHGT) are disordered.

It belongs to the glycosyl hydrolase 13 family.

It catalyses the reaction Hydrolysis of (1-&gt;6)-alpha-D-glucosidic linkages to branches with degrees of polymerization of three or four glucose residues in limit dextrin.. It participates in glycan degradation; glycogen degradation. Its function is as follows. Removes maltotriose and maltotetraose chains that are attached by 1,6-alpha-linkage to the limit dextrin main chain, generating a debranched limit dextrin. This chain is Glycogen debranching enzyme, found in Pectobacterium carotovorum subsp. carotovorum (strain PC1).